Here is a 123-residue protein sequence, read N- to C-terminus: Ribosome-binding factor A (123 aa).

It belongs to the RbfA family. In terms of assembly, monomer. Binds 30S ribosomal subunits, but not 50S ribosomal subunits or 70S ribosomes.

It localises to the cytoplasm. One of several proteins that assist in the late maturation steps of the functional core of the 30S ribosomal subunit. Associates with free 30S ribosomal subunits (but not with 30S subunits that are part of 70S ribosomes or polysomes). Required for efficient processing of 16S rRNA. May interact with the 5'-terminal helix region of 16S rRNA. The polypeptide is Ribosome-binding factor A (Chlamydia trachomatis serovar L2 (strain ATCC VR-902B / DSM 19102 / 434/Bu)).